Reading from the N-terminus, the 310-residue chain is tRNA dimethylallyltransferase (310 aa).

Residue 14-21 (GPTASGKT) participates in ATP binding. 16–21 (TASGKT) is a substrate binding site. Residues 39-42 (DSMQ) are interaction with substrate tRNA.

It belongs to the IPP transferase family. Monomer. Mg(2+) is required as a cofactor.

It carries out the reaction adenosine(37) in tRNA + dimethylallyl diphosphate = N(6)-dimethylallyladenosine(37) in tRNA + diphosphate. Functionally, catalyzes the transfer of a dimethylallyl group onto the adenine at position 37 in tRNAs that read codons beginning with uridine, leading to the formation of N6-(dimethylallyl)adenosine (i(6)A). The protein is tRNA dimethylallyltransferase of Corynebacterium jeikeium (strain K411).